Reading from the N-terminus, the 548-residue chain is Probable malate:quinone oxidoreductase (548 aa).

The tract at residues 521–548 is disordered; the sequence is DKPQAADSTPKPQLKPKPVQKEVADIAL. Over residues 539-548 the composition is skewed to basic and acidic residues; it reads VQKEVADIAL.

The protein belongs to the MQO family. Requires FAD as cofactor.

The catalysed reaction is (S)-malate + a quinone = a quinol + oxaloacetate. It functions in the pathway carbohydrate metabolism; tricarboxylic acid cycle; oxaloacetate from (S)-malate (quinone route): step 1/1. This chain is Probable malate:quinone oxidoreductase, found in Escherichia coli (strain ATCC 8739 / DSM 1576 / NBRC 3972 / NCIMB 8545 / WDCM 00012 / Crooks).